A 218-amino-acid chain; its full sequence is Hypoxanthine-guanine phosphoribosyltransferase (218 aa).

Lysine 69 contributes to the GMP binding site. Lysine 103 carries the post-translational modification N6-acetyllysine. Lysine 115 is covalently cross-linked (Glycyl lysine isopeptide (Lys-Gly) (interchain with G-Cter in SUMO1); alternate). Residue lysine 115 forms a Glycyl lysine isopeptide (Lys-Gly) (interchain with G-Cter in SUMO2); alternate linkage. GMP is bound by residues 134 to 142, lysine 166, 186 to 188, and aspartate 194; these read EDIIDTGKT and KFV. Catalysis depends on aspartate 138, which acts as the Proton acceptor. Threonine 142 carries the post-translational modification Phosphothreonine. Aspartate 194 lines the Mg(2+) pocket.

The protein belongs to the purine/pyrimidine phosphoribosyltransferase family. Homotetramer. Requires Mg(2+) as cofactor.

Its subcellular location is the cytoplasm. The catalysed reaction is IMP + diphosphate = hypoxanthine + 5-phospho-alpha-D-ribose 1-diphosphate. The enzyme catalyses GMP + diphosphate = guanine + 5-phospho-alpha-D-ribose 1-diphosphate. The protein operates within purine metabolism; IMP biosynthesis via salvage pathway; IMP from hypoxanthine: step 1/1. Its function is as follows. Converts guanine to guanosine monophosphate, and hypoxanthine to inosine monophosphate. Transfers the 5-phosphoribosyl group from 5-phosphoribosylpyrophosphate onto the purine. Plays a central role in the generation of purine nucleotides through the purine salvage pathway. This Mus musculus (Mouse) protein is Hypoxanthine-guanine phosphoribosyltransferase (Hprt1).